The sequence spans 313 residues: 2,3-dihydroxyphenylpropionate/2,3-dihydroxicinnamic acid 1,2-dioxygenase (313 aa).

H115 acts as the Proton donor in catalysis. Residue H179 is the Proton acceptor of the active site.

This sequence belongs to the LigB/MhpB extradiol dioxygenase family. As to quaternary structure, homotetramer. Fe(2+) serves as cofactor.

The enzyme catalyses 3-(2,3-dihydroxyphenyl)propanoate + O2 = (2Z,4E)-2-hydroxy-6-oxonona-2,4-dienedioate + H(+). It carries out the reaction (2E)-3-(2,3-dihydroxyphenyl)prop-2-enoate + O2 = (2Z,4E,7E)-2-hydroxy-6-oxonona-2,4,7-trienedioate + H(+). It participates in aromatic compound metabolism; 3-phenylpropanoate degradation. Functionally, catalyzes the non-heme iron(II)-dependent oxidative cleavage of 2,3-dihydroxyphenylpropionic acid and 2,3-dihydroxicinnamic acid into 2-hydroxy-6-ketononadienedioate and 2-hydroxy-6-ketononatrienedioate, respectively. The chain is 2,3-dihydroxyphenylpropionate/2,3-dihydroxicinnamic acid 1,2-dioxygenase from Mycobacterium ulcerans (strain Agy99).